The following is a 400-amino-acid chain: Phosphoglycerate kinase (400 aa).

Substrate-binding positions include 22 to 24 (DFN), R38, 61 to 64 (HLGR), R119, and R152. ATP contacts are provided by residues K205, G296, E327, and 353 to 356 (GGDT).

This sequence belongs to the phosphoglycerate kinase family. Monomer.

The protein resides in the cytoplasm. The catalysed reaction is (2R)-3-phosphoglycerate + ATP = (2R)-3-phospho-glyceroyl phosphate + ADP. It functions in the pathway carbohydrate degradation; glycolysis; pyruvate from D-glyceraldehyde 3-phosphate: step 2/5. This chain is Phosphoglycerate kinase, found in Campylobacter jejuni subsp. jejuni serotype O:6 (strain 81116 / NCTC 11828).